A 427-amino-acid chain; its full sequence is Transcription factor MYB98 (427 aa).

The Nuclear localization signal 1 motif lies at 195–202 (TRKLSSSS). 2 consecutive HTH myb-type domains span residues 212–267 (KSTL…RPDI) and 268–318 (KKET…RRQF). 2 DNA-binding regions (H-T-H motif) span residues 240 to 263 (WSHI…HNHL) and 291 to 314 (WAEI…NATK). Positions 361–368 (NKKKDVVV) match the Nuclear localization signal 2 motif.

In terms of tissue distribution, expressed at high levels in the synergid cells of the female gametophyte, and at lower levels in the endosperm of young seeds and the trichomes of young leaves and sepals.

It is found in the nucleus. Functionally, transcription factor that binds to the motif 5'-GTAACNT-3' in the promoter of target genes (e.g. DD11 and DD18) and promotes their expression within synergid cells (e.g. in the filiform apparatus) in ovules. Required for the formation of the filiform apparatus during synergid cell differentiation in the female gametophyte. Involved in pollen tube guidance to the micropyle. The sequence is that of Transcription factor MYB98 from Arabidopsis thaliana (Mouse-ear cress).